A 195-amino-acid chain; its full sequence is Endoribonuclease YbeY (195 aa).

Zn(2+) is bound by residues histidine 153, histidine 157, and histidine 163.

This sequence belongs to the endoribonuclease YbeY family. It depends on Zn(2+) as a cofactor.

The protein localises to the cytoplasm. Functionally, single strand-specific metallo-endoribonuclease involved in late-stage 70S ribosome quality control and in maturation of the 3' terminus of the 16S rRNA. This Prochlorococcus marinus (strain SARG / CCMP1375 / SS120) protein is Endoribonuclease YbeY.